The following is a 207-amino-acid chain: Histidine biosynthesis bifunctional protein HisIE (207 aa).

A phosphoribosyl-AMP cyclohydrolase region spans residues 1 to 117 (MQNFKELNEK…KISKNADFVF (117 aa)). Residues 118-207 (LARLEKLINA…ISKLKERHKA (90 aa)) form a phosphoribosyl-ATP pyrophosphohydrolase region.

The protein in the N-terminal section; belongs to the PRA-CH family. This sequence in the C-terminal section; belongs to the PRA-PH family.

It is found in the cytoplasm. It carries out the reaction 1-(5-phospho-beta-D-ribosyl)-ATP + H2O = 1-(5-phospho-beta-D-ribosyl)-5'-AMP + diphosphate + H(+). The catalysed reaction is 1-(5-phospho-beta-D-ribosyl)-5'-AMP + H2O = 1-(5-phospho-beta-D-ribosyl)-5-[(5-phospho-beta-D-ribosylamino)methylideneamino]imidazole-4-carboxamide. The protein operates within amino-acid biosynthesis; L-histidine biosynthesis; L-histidine from 5-phospho-alpha-D-ribose 1-diphosphate: step 2/9. Its pathway is amino-acid biosynthesis; L-histidine biosynthesis; L-histidine from 5-phospho-alpha-D-ribose 1-diphosphate: step 3/9. The sequence is that of Histidine biosynthesis bifunctional protein HisIE (hisI) from Campylobacter jejuni subsp. jejuni serotype O:2 (strain ATCC 700819 / NCTC 11168).